Consider the following 95-residue polypeptide: Aspartyl/glutamyl-tRNA(Asn/Gln) amidotransferase subunit C (95 aa).

It belongs to the GatC family. In terms of assembly, heterotrimer of A, B and C subunits.

The enzyme catalyses L-glutamyl-tRNA(Gln) + L-glutamine + ATP + H2O = L-glutaminyl-tRNA(Gln) + L-glutamate + ADP + phosphate + H(+). The catalysed reaction is L-aspartyl-tRNA(Asn) + L-glutamine + ATP + H2O = L-asparaginyl-tRNA(Asn) + L-glutamate + ADP + phosphate + 2 H(+). Allows the formation of correctly charged Asn-tRNA(Asn) or Gln-tRNA(Gln) through the transamidation of misacylated Asp-tRNA(Asn) or Glu-tRNA(Gln) in organisms which lack either or both of asparaginyl-tRNA or glutaminyl-tRNA synthetases. The reaction takes place in the presence of glutamine and ATP through an activated phospho-Asp-tRNA(Asn) or phospho-Glu-tRNA(Gln). The sequence is that of Aspartyl/glutamyl-tRNA(Asn/Gln) amidotransferase subunit C from Geobacter sulfurreducens (strain ATCC 51573 / DSM 12127 / PCA).